The sequence spans 473 residues: Probable cytosolic iron-sulfur protein assembly protein 1 (473 aa).

Residues 1-25 (MPSSTPGGSLKHLSDLTPPSQDRTW) are disordered. WD repeat units lie at residues 11-58 (KHLS…LLST) and 62-104 (GHKR…GRAE). Positions 112–133 (GGLAEADRQEGDDTDGDEEDED) are disordered. Acidic residues predominate over residues 123–133 (DDTDGDEEDED). 4 WD repeats span residues 144–183 (GHDS…DNNF), 191–230 (EHSG…WGQV), 235–313 (GHEG…KPPP), and 341–380 (MHDL…KPPV). The interval 377 to 405 (KPPVHTTSEQDKPDSARETQKANGERTAP) is disordered. Basic and acidic residues predominate over residues 384-400 (SEQDKPDSARETQKANG). The stretch at 438–473 (SQQQNFDNSEMDHANEEEVLLSTGDDGVVRVWTLER) is one WD 7 repeat.

It belongs to the WD repeat CIA1 family.

Its function is as follows. Essential component of the cytosolic iron-sulfur (Fe/S) protein assembly machinery. Required for the maturation of extramitochondrial Fe/S proteins. The protein is Probable cytosolic iron-sulfur protein assembly protein 1 of Coccidioides immitis (strain RS) (Valley fever fungus).